The primary structure comprises 276 residues: RNA-binding protein pno-1 (276 aa).

Disordered stretches follow at residues Met-1 to Thr-30 and Asp-62 to Val-101. Acidic residues predominate over residues Phe-8–Val-27. The KH domain maps to Gly-197–Val-249.

This sequence belongs to the PNO1 family. In terms of assembly, part of the small subunit (SSU) processome, composed of more than 70 proteins and the RNA chaperone small nucleolar RNA (snoRNA) U3.

It localises to the nucleus. The protein resides in the nucleolus. Part of the small subunit (SSU) processome, first precursor of the small eukaryotic ribosomal subunit. During the assembly of the SSU processome in the nucleolus, many ribosome biogenesis factors, an RNA chaperone and ribosomal proteins associate with the nascent pre-rRNA and work in concert to generate RNA folding, modifications, rearrangements and cleavage as well as targeted degradation of pre-ribosomal RNA by the RNA exosome. Positively regulates dimethylation of two adjacent adenosines in the loop of a conserved hairpin near the 3'-end of 18S rRNA. This chain is RNA-binding protein pno-1, found in Caenorhabditis briggsae.